The chain runs to 650 residues: Probable basic-leucine zipper transcription factor K (650 aa).

The stretch at I37 to Q180 forms a coiled coil. Disordered regions lie at residues I109 to E130 and T242 to L279. Over residues D118–Q129 the composition is skewed to acidic residues. Positions T242–D251 are enriched in polar residues. Residues N252–N278 are compositionally biased toward low complexity. Positions N259 to E286 form a coiled coil. A bZIP domain is found at F305–S368. Residues K307–K327 are basic motif. The leucine-zipper stretch occupies residues I330–L337. A compositionally biased stretch (low complexity) spans N452–N466. Residues N452–E473 form a disordered region.

The protein belongs to the bZIP family.

Its subcellular location is the nucleus. In terms of biological role, probable transcriptional regulator. The protein is Probable basic-leucine zipper transcription factor K (bzpK) of Dictyostelium discoideum (Social amoeba).